A 1503-amino-acid polypeptide reads, in one-letter code: MLAMKDKPWLLLFGLLAALSCLASFGDAAYPYYGTKIGALTRLHHGVSGDVYAVDSRTIFIKKFNYDGEAPAAYFYVGNTARPSNEGAARLRDERGGTASLTRRYRNKDVTLSLPEGKTLRDIKWFSVWCDEFAVNFGDVSIPPNLDFPRPQKISALRGVHGVSSDNIVIVDAQTLLVPNFSYDGEAPDAKFWVGRGQRPTSDGLRIPDENGKENPLRRYERKTIVLTLPEDLTIFDIGHFGVWCEAFTVDFGHVRLPEGLNVPPSLKMLGISPQSKLNCEVLYDDLAFEVRWAVAGESIVVQLVAKLEPNHYMSFGISPNKNISQMIGADAVVAWVDPQTGNGFATDYFLEGKAQCSGGRGACPDTKISEKTNSIRLLNAAMVNGYSIVTYQRSLAATDRLDLPISITGAESVVWAIGPLNDYQEVSFHTFYNKHLHQIEFGRQPKWNCPLPEGARGNSNSSEQEDSAPAAQSSTGGAGYPPAGRPNVEPDEEFYENRAEALHRQPPQRRQETAIITQRRPVPTPKPVNSNGAWDIPAIQCHEPEDGVFYAQMGPTGGKHGYPAITGHVGWGISWYINGLLIPEIHVVRGKTYTFVVEGGNNPDIPAKYHPFYISDDPVGGYEHKREEEKKAVRIYAGVHRSRSGQVTPTGVGRLCNWTPDVEGPPADDYQSFGAYQRTLTLKCDAGEPGVITWKPDRNTPDTVYYHCFTHRYLGWKIHVHDSCDSEAGGLKGAASERHEIRLPAKATVAEPAPVHEDYAGEASVRHETKVSANDNFLLKHQTDLIKNHNMNGTPPKLSFEITKSSEITKLISDGIRAAEALEESLLRNPNLNPNHPNQNPIPNPHQKPNVTPTEISSRPEILLGETHAHTLNASPSASAYPSPSATLPSANLKLPILAAGPHLIHHPPHLHRLHHQPQHAPHPHVHLHHHNLTANLPALAQKTIGLSEFLRPPQNAPLFHPVKLPGRRPFPAPIKKVPASRPILPQQHPHLHPHPQQHPVLLQQQPSLIVSHYRKPIPGLLKPFVKEKPFPLQPLAASVLLLGQPTELGGLNNKGERLKIKGKPKIPVPYVDLEPQGSLQNTAIFNQPGGKGKGDQKPKASSVSISTTPIPLVKRPTVKEPSQEEIASMRPAVNQGFKPDTVIVESGFKPIVRTDGTGVQLPKEIIDQVAHRREDPGTEIDEVMETDTLFLAAQQGGSETQSFEPMFIPSPLDSTNATKVLRVNVKEVSPTASALRLPSAALEHALPSASELIKPTLDELFAEDLNEEELEMEPMPVADDVESLEETTKKDAVTTTINIPRNTTKKPDPDLLEDLFGPDEEELYADELELDMDDRVAAAAERIDTYYLPPDNRKIPDTRVPSGALYTFDGKSVVDSSLVLPPKLDAPDNANVHQRHAQYGLTPLEQLVRTTPQFGVYRGELPQEFRGTEPQPVSEYSHPAPFSRTTPVFSSSSGSTIYPYSSSTGASTSTVSSSASSPLSSSSLRPISTKLQLLKPEGRRA.

The signal sequence occupies residues 1-28; that stretch reads MLAMKDKPWLLLFGLLAALSCLASFGDA. 2 consecutive DM13 domains span residues 34–143 and 151–258; these read GTKI…VSIP and PQKI…VRLP. Residues 287–419 enclose the DOMON domain; it reads LAFEVRWAVA…GAESVVWAIG (133 aa). 4 disordered regions span residues 451–491, 830–857, 1086–1106, and 1426–1503; these read PLPE…NVEP, NPNL…PTEI, IFNQ…SSVS, and EFRG…GRRA. Residues 830-840 are compositionally biased toward low complexity; it reads NPNLNPNHPNQ. Positions 1452 to 1491 are enriched in low complexity; sequence SSSSGSTIYPYSSSTGASTSTVSSSASSPLSSSSLRPIST.

Interacts with Chro and Mgtor as part of a macromolecular complex forming the spindle matrix. Chro colocalizes with Skeletor (Skel) on the chromosomes at interphase and on spindle during metaphase.

It is found in the cytoplasm. Its subcellular location is the cytoskeleton. The protein resides in the spindle. It localises to the nucleus. The protein localises to the nucleolus. It is found in the chromosome. Its function is as follows. Provides structural support to stabilize and organize the microtubule spindle during mitosis (within embryonic somatic cells) and meiosis (within spermatocytes). The role in mitosis regulation depends on the Ran pathway. The chain is Protein Skeletor, isoforms D/E from Drosophila melanogaster (Fruit fly).